We begin with the raw amino-acid sequence, 96 residues long: Co-chaperonin GroES (96 aa).

Belongs to the GroES chaperonin family. In terms of assembly, heptamer of 7 subunits arranged in a ring. Interacts with the chaperonin GroEL.

It is found in the cytoplasm. Functionally, together with the chaperonin GroEL, plays an essential role in assisting protein folding. The GroEL-GroES system forms a nano-cage that allows encapsulation of the non-native substrate proteins and provides a physical environment optimized to promote and accelerate protein folding. GroES binds to the apical surface of the GroEL ring, thereby capping the opening of the GroEL channel. The chain is Co-chaperonin GroES from Alcanivorax borkumensis (strain ATCC 700651 / DSM 11573 / NCIMB 13689 / SK2).